We begin with the raw amino-acid sequence, 122 residues long: ILPEFLSLVKHGKIRMEFRAVVKEITEDELIFSVDGKETRIKNDFVFAMTGYHPDHSFLQKMGVKIDAESGRPFFNEETMETNEEGIFIAGVIAAGNNANEIFIENGRFHGGLIAAEIAKRI.

This sequence to B.subtilis YpdA.

This is an uncharacterized protein from Bacillus licheniformis.